A 361-amino-acid chain; its full sequence is Biotin synthase (361 aa).

The 232-residue stretch at 47–278 folds into the Radical SAM core domain; the sequence is VHGDEVALCG…AAHIFVMGGR (232 aa). C65, C69, and C72 together coordinate [4Fe-4S] cluster. Residues S110, C143, and C203 each contribute to the [2Fe-2S] cluster site. The interval 323 to 361 is disordered; it reads TLRPPDTGKPWAFDGHAPSDADWNRKAAEPRPRPLPVVR. Over residues 339-354 the composition is skewed to basic and acidic residues; that stretch reads APSDADWNRKAAEPRP.

This sequence belongs to the radical SAM superfamily. Biotin synthase family. As to quaternary structure, homodimer. [4Fe-4S] cluster serves as cofactor. Requires [2Fe-2S] cluster as cofactor.

It catalyses the reaction (4R,5S)-dethiobiotin + (sulfur carrier)-SH + 2 reduced [2Fe-2S]-[ferredoxin] + 2 S-adenosyl-L-methionine = (sulfur carrier)-H + biotin + 2 5'-deoxyadenosine + 2 L-methionine + 2 oxidized [2Fe-2S]-[ferredoxin]. Its pathway is cofactor biosynthesis; biotin biosynthesis; biotin from 7,8-diaminononanoate: step 2/2. Catalyzes the conversion of dethiobiotin (DTB) to biotin by the insertion of a sulfur atom into dethiobiotin via a radical-based mechanism. The sequence is that of Biotin synthase from Anaeromyxobacter sp. (strain K).